The sequence spans 248 residues: PF03932 family protein CutC (248 aa).

This sequence belongs to the CutC family. Homodimer.

The protein resides in the cytoplasm. This is PF03932 family protein CutC from Shigella boydii serotype 18 (strain CDC 3083-94 / BS512).